A 434-amino-acid polypeptide reads, in one-letter code: Tol-Pal system protein TolB (434 aa).

Positions 1–24 are cleaved as a signal peptide; the sequence is MKFSAYLTTLFIVLFSLFIQTVQA.

This sequence belongs to the TolB family. As to quaternary structure, the Tol-Pal system is composed of five core proteins: the inner membrane proteins TolA, TolQ and TolR, the periplasmic protein TolB and the outer membrane protein Pal. They form a network linking the inner and outer membranes and the peptidoglycan layer.

The protein resides in the periplasm. Part of the Tol-Pal system, which plays a role in outer membrane invagination during cell division and is important for maintaining outer membrane integrity. The polypeptide is Tol-Pal system protein TolB (Histophilus somni (strain 2336) (Haemophilus somnus)).